Reading from the N-terminus, the 311-residue chain is MVGLQPSERPPTTSVKFLAAGTAACFADLLTFPLDTAKVRLQIQGENQAALAARSAQYRGVLGTILTMVRTEGPRSLYSGLVAGLQRQMSFASIRIGLYDSVKQFYTPKGSDHSSIITRILAGCTTGAMAVTCAQPTDVVKIRFQASMHTGLGGNRKYSGTMDAYRTIAREEGVRGLWKGILPNITRNAIVNCGEMVTYDIIKEKLLDYHLLTDNFPCHFVSAFGAGFCATLVASPVDVVKTRYMNSPPGQYHSPFDCMLKMVTQEGPTAFYKGFTPSFLRLGSWNVVMFVTYEQMKRALMKVQMLRDSPF.

Topologically, residues 1 to 10 (MVGLQPSERP) are mitochondrial intermembrane. A helical transmembrane segment spans residues 11–32 (PTTSVKFLAAGTAACFADLLTF). Solcar repeat units follow at residues 11–105 (PTTS…VKQF), 114–205 (SSII…IKEK), and 214–299 (DNFP…MKRA). Topologically, residues 33–76 (PLDTAKVRLQIQGENQAALAARSAQYRGVLGTILTMVRTEGPRS) are mitochondrial matrix. The helical transmembrane segment at 77-99 (LYSGLVAGLQRQMSFASIRIGLY) threads the bilayer. At 100 to 119 (DSVKQFYTPKGSDHSSIITR) the chain is on the mitochondrial intermembrane side. The helical transmembrane segment at 120 to 136 (ILAGCTTGAMAVTCAQP) threads the bilayer. Over 137 to 182 (TDVVKIRFQASMHTGLGGNRKYSGTMDAYRTIAREEGVRGLWKGIL) the chain is Mitochondrial matrix. A helical transmembrane segment spans residues 183–199 (PNITRNAIVNCGEMVTY). Over 200–216 (DIIKEKLLDYHLLTDNF) the chain is Mitochondrial intermembrane. Residues 217-236 (PCHFVSAFGAGFCATLVASP) traverse the membrane as a helical segment. The Mitochondrial matrix segment spans residues 237 to 270 (VDVVKTRYMNSPPGQYHSPFDCMLKMVTQEGPTA). Residues 271-293 (FYKGFTPSFLRLGSWNVVMFVTY) traverse the membrane as a helical segment. Residues 278-300 (SFLRLGSWNVVMFVTYEQMKRAL) form a purine nucleotide binding region. At 294–311 (EQMKRALMKVQMLRDSPF) the chain is on the mitochondrial intermembrane side.

The protein belongs to the mitochondrial carrier (TC 2.A.29) family. Interacts with HAX1; the interaction is direct and calcium-dependent.

It localises to the mitochondrion inner membrane. In terms of biological role, putative transmembrane transporter that plays a role in mitochondrial metabolism via an as yet unclear mechanism. Originally, this mitochondrial protein was thought to act as a proton transmembrane transporter from the mitochondrial intermembrane space into the matrix, causing proton leaks through the inner mitochondrial membrane, thereby uncoupling mitochondrial membrane potential generation from ATP synthesis. However, this function is controversial and uncoupling may not be the function, or at least not the main function, but rather a consequence of more conventional metabolite transporter activity. The protein is Putative mitochondrial transporter UCP3 of Bos taurus (Bovine).